The primary structure comprises 673 residues: Leucine zipper putative tumor suppressor 3 (673 aa).

Disordered regions lie at residues 1 to 157 (MAKL…CSEP), 172 to 239 (FHSM…QHLA), and 251 to 317 (IGTA…PPSP). Residues 79 to 92 (SRERPGRYPSEDKG) are compositionally biased toward basic and acidic residues. Polar residues predominate over residues 173-186 (HSMQNLCPPQTNGT). Over residues 215-235 (GLSDSGRNSLTSLPTYSSSYS) the composition is skewed to low complexity. Positions 258–269 (SGSGGSSGGGSG) are enriched in gly residues. Residues 274 to 294 (GTSDSGRASSKSGSSSSMGRP) show a composition bias toward low complexity. Over residues 295-307 (GHLGSGEGGGGGL) the composition is skewed to gly residues. Residues Ser316 and Ser318 each carry the phosphoserine modification. 2 coiled-coil regions span residues 317-496 (PSAL…SLRD) and 571-639 (RALR…RLRE). The tract at residues 635-673 (RRLRERGAAGGASTPTPQHGEEKKAWTPSRLERIESTEI) is disordered. Basic and acidic residues predominate over residues 653 to 673 (HGEEKKAWTPSRLERIESTEI).

This sequence belongs to the LZTS3 family. Interacts (via C-terminus) with SHANK3 (via PDZ domain). Interacts (via coiled coil) with SIPA1L1. Can form homooligomers.

The protein resides in the synapse. It localises to the postsynaptic density. It is found in the cell projection. The protein localises to the dendritic spine. Its subcellular location is the dendrite. The protein resides in the cytoplasm. It localises to the cytoskeleton. Functionally, may be involved in promoting the maturation of dendritic spines, probably via regulating SIPA1L1 levels at the postsynaptic density of synapses. This is Leucine zipper putative tumor suppressor 3 from Homo sapiens (Human).